The sequence spans 246 residues: Uridylate kinase (246 aa).

ATP is bound at residue 11-14 (KLSG). A UMP-binding site is contributed by G53. Residues G54 and R58 each contribute to the ATP site. UMP is bound by residues D73 and 134–141 (TGNPYFTT). Positions 161, 167, and 170 each coordinate ATP.

The protein belongs to the UMP kinase family. As to quaternary structure, homohexamer.

It is found in the cytoplasm. The catalysed reaction is UMP + ATP = UDP + ADP. It functions in the pathway pyrimidine metabolism; CTP biosynthesis via de novo pathway; UDP from UMP (UMPK route): step 1/1. Its activity is regulated as follows. Inhibited by UTP. Catalyzes the reversible phosphorylation of UMP to UDP. This is Uridylate kinase from Leptospira borgpetersenii serovar Hardjo-bovis (strain JB197).